The chain runs to 353 residues: 3'(2'),5'-bisphosphate nucleotidase (353 aa).

Aspartate 50 serves as the catalytic Proton acceptor. Positions 73, 136, 138, and 139 each coordinate Mg(2+). Threonine 141 serves as the catalytic Proton acceptor. Threonine 141, histidine 232, serine 256, lysine 259, arginine 273, and aspartate 286 together coordinate adenosine 3',5'-bisphosphate. AMP is bound by residues histidine 232, serine 256, lysine 259, arginine 273, and aspartate 286. Aspartate 286 is a binding site for Mg(2+).

It belongs to the inositol monophosphatase superfamily. Requires Mg(2+) as cofactor.

It catalyses the reaction 3'-phosphoadenylyl sulfate + H2O = adenosine 5'-phosphosulfate + phosphate. It carries out the reaction adenosine 3',5'-bisphosphate + H2O = AMP + phosphate. The enzyme catalyses adenosine 2',5'-bisphosphate + H2O = AMP + phosphate. The catalysed reaction is 1D-myo-inositol 1,4-bisphosphate + H2O = 1D-myo-inositol 4-phosphate + phosphate. It catalyses the reaction 1D-myo-inositol 1,3,4-trisphosphate + H2O = 1D-myo-inositol 3,4-bisphosphate + phosphate. Inhibited by Li(+) and Na(+). Functionally, phosphatase that converts adenosine 3'-phosphate 5'-phosphosulfate (PAPS) to adenosine 5'-phosphosulfate (APS) and 3'(2')-phosphoadenosine 5'-phosphate (PAP) to AMP. May regulate the flux of sulfur in the sulfur-activation pathway by converting PAPS to APS. Is also able to hydrolyze inositol 1,4-bisphosphate (Ins(1,4)P2) and inositol 1,3,4-trisphosphate (Ins(1,3,4)P3), but is not active on inositol 1,4,5-trisphosphate, inositol 1-phosphate, fructose 1,6-bisphosphate, AMP and ATP. In terms of biological role, confers resistance to lithium. This is 3'(2'),5'-bisphosphate nucleotidase (tol1) from Schizosaccharomyces pombe (strain 972 / ATCC 24843) (Fission yeast).